A 394-amino-acid chain; its full sequence is 2-oxoglutarate and iron-dependent oxygenase domain-containing protein CP2 (394 aa).

The disordered stretch occupies residues 1 to 35 (MSSEQREGSQETTTTTVEGNGTIAGQNSHSAAPTT). Residues 17–35 (VEGNGTIAGQNSHSAAPTT) show a composition bias toward polar residues. The Fe2OG dioxygenase domain maps to 248 to 347 (DSHHGFVVEY…RVNMLLWCRS (100 aa)). Residues H268, D270, and H328 each contribute to the Fe cation site. R338 is a binding site for 2-oxoglutarate.

Requires Fe(2+) as cofactor. It depends on L-ascorbate as a cofactor. As to expression, expressed in roots, cotyledons, rosette leaves, cauline leaves, inflorescences and siliques.

It is found in the nucleus. It localises to the nucleoplasm. Functionally, participates in the epigenetic repression of flowering genes in association with ICU11. Functions in the repression of several members of the MADS-box transcription factors family, including SEP3, during vegetative development via histone modification. The polypeptide is 2-oxoglutarate and iron-dependent oxygenase domain-containing protein CP2 (Arabidopsis thaliana (Mouse-ear cress)).